Reading from the N-terminus, the 532-residue chain is MLSFILSIFPIVLLIYLMVKRNALPSYVALPWVATLVMGVHLLHFNTDIVTISANVVSAIIAVQTPITVIFGAILFNRFSEISGATNIMRKWLGNINPNPVAQLMIIGWAFAFMIEGASGFGTPAAIAAPILVGLGFHPLKVAMLALIMNSVPVSFGAVGTPTWFGFGALKLSEDMILEIGSITAFIHSIAALIIPLLALRILVNWDDIRKNIVFIYISVLGCVVPYFLIAQVNYEFPSLVGGAIGLFISVWAANRNIGLAKVTNTLDNNAVSAGEVVKALFPTGLLIAFLIVTRIHQLPFKAMMNDATIWFSTTLGSLGLFEISKGLIFSLKNIFGSNVSSSYKLLYVPALIPFVITVLIAIPFFKISSSNVKQILVSSLQQSKNPFIALIGALVMVNLMLVGGEHSMVKIIGRTFAEISGSNWTIFSSFLGAIGSFFSGSNTVSNLTFGSVQLSTAETTGISVALVLALQSVGGAMGNMVCINNIVAVSSVLNISNQEGTIIKKTIIPMIIYGIIAALGALFLVPLFYNL.

Transmembrane regions (helical) follow at residues 23–43, 56–76, 101–121, 129–149, 152–172, 180–200, 213–233, 234–254, 274–294, 346–366, 387–407, 420–440, 462–482, and 508–528; these read ALPS…VHLL, VVSA…AILF, VAQL…ASGF, APIL…ALIM, VPVS…ALKL, IGSI…LLAL, IVFI…IAQV, NYEF…VWAA, AGEV…LIVT, LLYV…IPFF, PFIA…GGEH, ISGS…SFFS, GISV…GNMV, and IIPM…LVPL.

The protein belongs to the lactate permease family.

Its subcellular location is the cell inner membrane. In terms of biological role, may play a role in L-lactate transport. This chain is Putative L-lactate permease, found in Haemophilus influenzae (strain ATCC 51907 / DSM 11121 / KW20 / Rd).